The following is a 95-amino-acid chain: Putative defensin-like protein 252 (95 aa).

An N-terminal signal peptide occupies residues 1-27; sequence MRCVTSFVVLCILMFLVVNNVKVDVKA. 4 disulfide bridges follow: Cys-34/Cys-93, Cys-45/Cys-72, Cys-56/Cys-85, and Cys-70/Cys-87.

It belongs to the DEFL family.

The protein localises to the secreted. This is Putative defensin-like protein 252 (SCRL13) from Arabidopsis thaliana (Mouse-ear cress).